A 333-amino-acid chain; its full sequence is 4-hydroxy-3-methylbut-2-enyl diphosphate reductase (333 aa).

[4Fe-4S] cluster is bound at residue Cys34. (2E)-4-hydroxy-3-methylbut-2-enyl diphosphate is bound by residues His63 and His96. Dimethylallyl diphosphate-binding residues include His63 and His96. 2 residues coordinate isopentenyl diphosphate: His63 and His96. Cys118 is a [4Fe-4S] cluster binding site. His146 is a (2E)-4-hydroxy-3-methylbut-2-enyl diphosphate binding site. His146 contacts dimethylallyl diphosphate. His146 contacts isopentenyl diphosphate. Catalysis depends on Glu148, which acts as the Proton donor. Thr186 contacts (2E)-4-hydroxy-3-methylbut-2-enyl diphosphate. Cys216 is a binding site for [4Fe-4S] cluster. Ser244, Ser245, Asn246, and Ser289 together coordinate (2E)-4-hydroxy-3-methylbut-2-enyl diphosphate. Positions 244, 245, 246, and 289 each coordinate dimethylallyl diphosphate. Residues Ser244, Ser245, Asn246, and Ser289 each contribute to the isopentenyl diphosphate site.

This sequence belongs to the IspH family. [4Fe-4S] cluster is required as a cofactor.

The catalysed reaction is isopentenyl diphosphate + 2 oxidized [2Fe-2S]-[ferredoxin] + H2O = (2E)-4-hydroxy-3-methylbut-2-enyl diphosphate + 2 reduced [2Fe-2S]-[ferredoxin] + 2 H(+). The enzyme catalyses dimethylallyl diphosphate + 2 oxidized [2Fe-2S]-[ferredoxin] + H2O = (2E)-4-hydroxy-3-methylbut-2-enyl diphosphate + 2 reduced [2Fe-2S]-[ferredoxin] + 2 H(+). The protein operates within isoprenoid biosynthesis; dimethylallyl diphosphate biosynthesis; dimethylallyl diphosphate from (2E)-4-hydroxy-3-methylbutenyl diphosphate: step 1/1. Its pathway is isoprenoid biosynthesis; isopentenyl diphosphate biosynthesis via DXP pathway; isopentenyl diphosphate from 1-deoxy-D-xylulose 5-phosphate: step 6/6. In terms of biological role, catalyzes the conversion of 1-hydroxy-2-methyl-2-(E)-butenyl 4-diphosphate (HMBPP) into a mixture of isopentenyl diphosphate (IPP) and dimethylallyl diphosphate (DMAPP). Acts in the terminal step of the DOXP/MEP pathway for isoprenoid precursor biosynthesis. The polypeptide is 4-hydroxy-3-methylbut-2-enyl diphosphate reductase (Mycolicibacterium gilvum (strain PYR-GCK) (Mycobacterium gilvum (strain PYR-GCK))).